A 464-amino-acid polypeptide reads, in one-letter code: Glutamate--tRNA ligase (464 aa).

Positions 9-19 (PSPTGYLHIGG) match the 'HIGH' region motif. Positions 242–246 (KISKR) match the 'KMSKS' region motif. Lys-245 is an ATP binding site.

It belongs to the class-I aminoacyl-tRNA synthetase family. Glutamate--tRNA ligase type 1 subfamily. Monomer.

The protein resides in the cytoplasm. It carries out the reaction tRNA(Glu) + L-glutamate + ATP = L-glutamyl-tRNA(Glu) + AMP + diphosphate. In terms of biological role, catalyzes the attachment of glutamate to tRNA(Glu) in a two-step reaction: glutamate is first activated by ATP to form Glu-AMP and then transferred to the acceptor end of tRNA(Glu). The sequence is that of Glutamate--tRNA ligase from Neisseria gonorrhoeae (strain ATCC 700825 / FA 1090).